The sequence spans 628 residues: 2-oxoacid:ferredoxin oxidoreductase 2, subunit alpha (628 aa).

The YPITP motif signature appears at 254–258 (YPITP). Positions 257 and 344 each coordinate substrate.

Heterodimer composed of an alpha and a beta subunit.

It catalyses the reaction a 2-oxocarboxylate + 2 oxidized [2Fe-2S]-[ferredoxin] + CoA = an acyl-CoA + 2 reduced [2Fe-2S]-[ferredoxin] + CO2 + H(+). Catalyzes the coenzyme A-dependent oxidative decarboxylation of different 2-oxoacids such as 2-oxoglutarate, pyruvate and 2-oxobutyrate to form their CoA derivatives. The protein is 2-oxoacid:ferredoxin oxidoreductase 2, subunit alpha of Sulfurisphaera tokodaii (strain DSM 16993 / JCM 10545 / NBRC 100140 / 7) (Sulfolobus tokodaii).